Here is a 189-residue protein sequence, read N- to C-terminus: UPF0301 protein PLES_04031 (189 aa).

It belongs to the UPF0301 (AlgH) family.

The protein is UPF0301 protein PLES_04031 of Pseudomonas aeruginosa (strain LESB58).